The primary structure comprises 136 residues: Protein NrdI (136 aa).

Belongs to the NrdI family.

Functionally, probably involved in ribonucleotide reductase function. This chain is Protein NrdI, found in Klebsiella pneumoniae subsp. pneumoniae (strain ATCC 700721 / MGH 78578).